Reading from the N-terminus, the 55-residue chain is Large ribosomal subunit protein uL15 (55 aa).

This sequence belongs to the universal ribosomal protein uL15 family. As to quaternary structure, part of the 50S ribosomal subunit.

Binds to the 23S rRNA. The chain is Large ribosomal subunit protein uL15 (rplO) from Lactococcus lactis subsp. cremoris (Streptococcus cremoris).